The sequence spans 2890 residues: Bifunctional DNA-directed RNA polymerase subunit beta-beta' (2890 aa).

The segment at 1 to 1377 (MSKKIPLKNR…DINIFGDDVD (1377 aa)) is DNA-directed RNA polymerase subunit beta. The interval 1384–2890 (PIVIKEDDRP…LRTLEDGPKF (1507 aa)) is DNA-directed RNA polymerase subunit beta'. Zn(2+) is bound by residues Cys1449, Cys1451, Cys1465, and Cys1468. Residues Asp1849, Asp1851, and Asp1853 each coordinate Mg(2+). Zn(2+) contacts are provided by Cys2179, Cys2253, Cys2260, and Cys2263.

In the N-terminal section; belongs to the RNA polymerase beta chain family. This sequence in the C-terminal section; belongs to the RNA polymerase beta' chain family. In terms of assembly, the RNAP catalytic core consists of 2 alpha, 1 beta/beta' and 1 omega subunit. When a sigma factor is associated with the core the holoenzyme is formed, which can initiate transcription. The cofactor is Mg(2+). It depends on Zn(2+) as a cofactor.

The enzyme catalyses RNA(n) + a ribonucleoside 5'-triphosphate = RNA(n+1) + diphosphate. In terms of biological role, DNA-dependent RNA polymerase catalyzes the transcription of DNA into RNA using the four ribonucleoside triphosphates as substrates. The protein is Bifunctional DNA-directed RNA polymerase subunit beta-beta' (rpoBC) of Helicobacter pylori (strain HPAG1).